Consider the following 445-residue polypeptide: Sensor protein kinase CarS (445 aa).

The first 24 residues, 1-24, serve as a signal peptide directing secretion; sequence MRSIQRRLSVGLFAVLLVVGLVLA. A helical membrane pass occupies residues 150-170; the sequence is FARVQWMGLGAGALALLLVLL. Residues 177–228 enclose the HAMP domain; that stretch reads RRSLRPLEEVRLQIAQLQQGQRSQLDNQAPEELEPLVEQINHLLAHTEETLK. The Histidine kinase domain occupies 236–438; the sequence is NLGHALKTPL…RVSVELPLQK (203 aa). His-239 bears the Phosphohistidine; by autocatalysis mark.

The protein resides in the membrane. It catalyses the reaction ATP + protein L-histidine = ADP + protein N-phospho-L-histidine.. Member of the two-component regulatory system CarS/CarR that regulates the expression of multiple genes involved in calcium signaling and homeostasis including CarO and CarP. May function as a membrane-associated protein kinase that phosphorylates CarR in response to environmental signals leading to activation of specific gene promoters. The chain is Sensor protein kinase CarS (carS) from Pseudomonas aeruginosa (strain ATCC 15692 / DSM 22644 / CIP 104116 / JCM 14847 / LMG 12228 / 1C / PRS 101 / PAO1).